A 450-amino-acid polypeptide reads, in one-letter code: Probable ECA polymerase (450 aa).

11 helical membrane passes run 6 to 26 (FSGL…LTWF), 37 to 57 (VFFS…TSVL), 63 to 83 (VGVA…CFYA), 118 to 138 (VILM…NGFL), 155 to 175 (GVAL…VYFL), 181 to 201 (AWLF…MIVG), 207 to 227 (IIIA…ISLW), 228 to 248 (MLAA…LKRY), 341 to 361 (LVVM…GLII), 378 to 398 (YKAA…IVLA), and 410 to 430 (VFFI…YWLF).

Belongs to the WzyE family. Probably part of a complex composed of WzxE, WzyE and WzzE.

The protein resides in the cell inner membrane. It functions in the pathway bacterial outer membrane biogenesis; enterobacterial common antigen biosynthesis. In terms of biological role, probably involved in the polymerization of enterobacterial common antigen (ECA) trisaccharide repeat units. This Shigella sonnei (strain Ss046) protein is Probable ECA polymerase.